The sequence spans 315 residues: Probable cytosolic iron-sulfur protein assembly protein CIAO1 homolog (315 aa).

WD repeat units follow at residues 11 to 50, 56 to 95, 100 to 139, 145 to 188, 189 to 229, 236 to 275, and 283 to 315; these read GHED…WVCK, GHQR…FESC, GHEN…EFEC, CHSQ…CTLD, KHAS…RSWE, RHPR…CSWR, and AHSQ…WQID.

It belongs to the WD repeat CIA1 family.

Its function is as follows. Essential component of the cytosolic iron-sulfur (Fe/S) protein assembly machinery. Required for the maturation of extramitochondrial Fe/S proteins. The protein is Probable cytosolic iron-sulfur protein assembly protein CIAO1 homolog of Ixodes scapularis (Black-legged tick).